The primary structure comprises 457 residues: D-hydantoinase (457 aa).

Residues H57 and H59 each contribute to the Zn(2+) site. S69 bears the Phosphoserine mark. K148 lines the Zn(2+) pocket. At K148 the chain carries N6-carboxylysine. Substrate is bound at residue Y153. Zn(2+)-binding residues include H181 and H237. Substrate is bound at residue T286. A Zn(2+)-binding site is contributed by D313. Position 335 (N335) interacts with substrate.

Belongs to the metallo-dependent hydrolases superfamily. Hydantoinase/dihydropyrimidinase family. In terms of assembly, homotetramer. It depends on Zn(2+) as a cofactor. In terms of processing, carboxylation allows a single lysine to coordinate two zinc ions.

Its function is as follows. Catalyzes the stereospecific hydrolysis of the cyclic amide bond of D-hydantoin derivatives. The sequence is that of D-hydantoinase (hyuA) from Rhizobium radiobacter (Agrobacterium tumefaciens).